The primary structure comprises 436 residues: 3-ketoacyl-CoA thiolase (436 aa).

Cysteine 99 (acyl-thioester intermediate) is an active-site residue. Residues histidine 392 and cysteine 422 each act as proton acceptor in the active site.

The protein belongs to the thiolase-like superfamily. Thiolase family. In terms of assembly, heterotetramer of two alpha chains (FadJ) and two beta chains (FadI).

It is found in the cytoplasm. The catalysed reaction is an acyl-CoA + acetyl-CoA = a 3-oxoacyl-CoA + CoA. It participates in lipid metabolism; fatty acid beta-oxidation. In terms of biological role, catalyzes the final step of fatty acid oxidation in which acetyl-CoA is released and the CoA ester of a fatty acid two carbons shorter is formed. In Escherichia coli (strain K12 / MC4100 / BW2952), this protein is 3-ketoacyl-CoA thiolase.